The chain runs to 254 residues: Flavin-dependent thymidylate synthase (254 aa).

Residues 7 to 237 form the ThyX domain; sequence LRVQLIARTE…PAVFADFEIY (231 aa). FAD is bound by residues Ser-71, 95 to 97, and Gln-103; that span reads RHR. Residues 92–95, 103–107, and Arg-176 each bind dUMP; these read ELIR and QLSQR. The ThyX motif motif lies at 95–105; that stretch reads RHRHFSYSQLS. Residues 192–194 and His-198 each bind FAD; that span reads NYR. Arg-203 lines the dUMP pocket. Arg-203 (involved in ionization of N3 of dUMP, leading to its activation) is an active-site residue.

This sequence belongs to the thymidylate synthase ThyX family. In terms of assembly, homotetramer. Requires FAD as cofactor.

It catalyses the reaction dUMP + (6R)-5,10-methylene-5,6,7,8-tetrahydrofolate + NADPH + H(+) = dTMP + (6S)-5,6,7,8-tetrahydrofolate + NADP(+). Its pathway is pyrimidine metabolism; dTTP biosynthesis. Its function is as follows. Catalyzes the reductive methylation of 2'-deoxyuridine-5'-monophosphate (dUMP) to 2'-deoxythymidine-5'-monophosphate (dTMP) while utilizing 5,10-methylenetetrahydrofolate (mTHF) as the methyl donor, and NADPH and FADH(2) as the reductant. The polypeptide is Flavin-dependent thymidylate synthase (Mycobacterium sp. (strain JLS)).